Consider the following 124-residue polypeptide: Probable glycine cleavage system H protein (124 aa).

Positions 25–106 (TATIGITDYA…PYGSWLVKMA (82 aa)) constitute a Lipoyl-binding domain. Lysine 66 carries the post-translational modification N6-lipoyllysine.

The protein belongs to the GcvH family. In terms of assembly, the glycine cleavage system is composed of four proteins: P, T, L and H. It depends on (R)-lipoate as a cofactor.

Its function is as follows. The glycine cleavage system catalyzes the degradation of glycine. The H protein shuttles the methylamine group of glycine from the P protein to the T protein. The sequence is that of Probable glycine cleavage system H protein from Thermoplasma acidophilum (strain ATCC 25905 / DSM 1728 / JCM 9062 / NBRC 15155 / AMRC-C165).